Here is a 199-residue protein sequence, read N- to C-terminus: uncharacterized protein (199 aa).

This is an uncharacterized protein from Treponema pallidum (strain Nichols).